A 308-amino-acid chain; its full sequence is Putative lipid kinase SH2167 (308 aa).

The region spanning 1-139 (MGQKFNHGVL…YDVMKVNGTY (139 aa)) is the DAGKc domain. Residues Ser-44, 74–80 (GDGTVNE), and Thr-101 each bind ATP. 3 residues coordinate Mg(2+): Ser-220, Asp-223, and Lys-225. Glu-281 (proton acceptor) is an active-site residue.

The protein belongs to the diacylglycerol/lipid kinase family. Mg(2+) is required as a cofactor.

May catalyze the ATP-dependent phosphorylation of lipids other than diacylglycerol (DAG). The protein is Putative lipid kinase SH2167 of Staphylococcus haemolyticus (strain JCSC1435).